The sequence spans 650 residues: Threonine--tRNA ligase (650 aa).

One can recognise a TGS domain in the interval 1 to 61; it reads MIKITFPDGA…DEDGTLEIVM (61 aa). A catalytic region spans residues 242–540; sequence DHRKLGKELD…LIETYKGAFP (299 aa). Zn(2+) contacts are provided by Cys336, His387, and His517.

Belongs to the class-II aminoacyl-tRNA synthetase family. Homodimer. Zn(2+) is required as a cofactor.

The protein resides in the cytoplasm. It catalyses the reaction tRNA(Thr) + L-threonine + ATP = L-threonyl-tRNA(Thr) + AMP + diphosphate + H(+). In terms of biological role, catalyzes the attachment of threonine to tRNA(Thr) in a two-step reaction: L-threonine is first activated by ATP to form Thr-AMP and then transferred to the acceptor end of tRNA(Thr). Also edits incorrectly charged L-seryl-tRNA(Thr). This Streptococcus suis (strain 98HAH33) protein is Threonine--tRNA ligase.